Consider the following 404-residue polypeptide: MNTGEMKINWVSRYMPLLNKIAEEYSREKPLSGFTVGMSIHLEAKTAYLAITLSKLGAKVVITGSNPLSTQDDVAEALRSKGITVYARRTHDESIYRENLMKVLDERPDFIIDDGGDLTVISHTEREEVLENLKGVSEETTTGVRRLKALEETGKLRVPVIAVNDSKMKYLFDNRYGTGQSTWDAIMRNTNLLVAGKNVVVAGYGWCGRGIALRAAGLGARVIVTEVDPVKAVEAIMDGFTVMPMKEAVKIADFVITASGNTDVLSKEDILSLKDGAVLANAGHFNVEIPVRVLEEIAVEKFEARPNVTGYTLENGKTVFLLAEGRLVNLAAGDGHPVEIMDLSFALQIFAVLYLLENHRKMSPKVYMLPDEIDERVARMKLDSLGVKIDELTEKQRRYLRSWQ.

Residues D114 and E139 each coordinate substrate. 140–142 is a binding site for NAD(+); that stretch reads TTT. K169 and D173 together coordinate substrate. Residues N174, 203–208, E226, N261, 282–284, and N329 each bind NAD(+); these read GYGWCG and AGH.

This sequence belongs to the adenosylhomocysteinase family. It depends on NAD(+) as a cofactor.

Its subcellular location is the cytoplasm. The catalysed reaction is S-adenosyl-L-homocysteine + H2O = L-homocysteine + adenosine. It participates in amino-acid biosynthesis; L-homocysteine biosynthesis; L-homocysteine from S-adenosyl-L-homocysteine: step 1/1. In terms of biological role, may play a key role in the regulation of the intracellular concentration of adenosylhomocysteine. This is Adenosylhomocysteinase from Thermotoga maritima (strain ATCC 43589 / DSM 3109 / JCM 10099 / NBRC 100826 / MSB8).